A 90-amino-acid polypeptide reads, in one-letter code: U7-theraphotoxin-Hhn1f (90 aa).

The first 19 residues, 1–19 (MKTAIFTVVLALAVFAVLS), serve as a signal peptide directing secretion. A propeptide spanning residues 20-50 (FGWEANEKALSEEFTELIHEKEAASETEARG) is cleaved from the precursor. Cystine bridges form between Cys51–Cys65, Cys58–Cys70, and Cys64–Cys81.

Belongs to the neurotoxin 10 (Hwtx-1) family. 13 (Hntx-13) subfamily. In terms of tissue distribution, expressed by the venom gland.

The protein localises to the secreted. Ion channel inhibitor. In Cyriopagopus hainanus (Chinese bird spider), this protein is U7-theraphotoxin-Hhn1f.